Here is a 268-residue protein sequence, read N- to C-terminus: Indole-3-glycerol phosphate synthase (268 aa).

This sequence belongs to the TrpC family.

The catalysed reaction is 1-(2-carboxyphenylamino)-1-deoxy-D-ribulose 5-phosphate + H(+) = (1S,2R)-1-C-(indol-3-yl)glycerol 3-phosphate + CO2 + H2O. It participates in amino-acid biosynthesis; L-tryptophan biosynthesis; L-tryptophan from chorismate: step 4/5. This is Indole-3-glycerol phosphate synthase from Lachnospira eligens (strain ATCC 27750 / DSM 3376 / VPI C15-48 / C15-B4) (Eubacterium eligens).